The chain runs to 96 residues: Large ribosomal subunit protein uL23 (96 aa).

This sequence belongs to the universal ribosomal protein uL23 family. Part of the 50S ribosomal subunit. Contacts protein L29, and trigger factor when it is bound to the ribosome.

In terms of biological role, one of the early assembly proteins it binds 23S rRNA. One of the proteins that surrounds the polypeptide exit tunnel on the outside of the ribosome. Forms the main docking site for trigger factor binding to the ribosome. In Maridesulfovibrio salexigens (strain ATCC 14822 / DSM 2638 / NCIMB 8403 / VKM B-1763) (Desulfovibrio salexigens), this protein is Large ribosomal subunit protein uL23.